Reading from the N-terminus, the 679-residue chain is Glycine--tRNA ligase beta subunit (679 aa).

This sequence belongs to the class-II aminoacyl-tRNA synthetase family. As to quaternary structure, tetramer of two alpha and two beta subunits.

The protein localises to the cytoplasm. It carries out the reaction tRNA(Gly) + glycine + ATP = glycyl-tRNA(Gly) + AMP + diphosphate. The protein is Glycine--tRNA ligase beta subunit of Streptococcus equi subsp. zooepidemicus (strain H70).